We begin with the raw amino-acid sequence, 2376 residues long: MAG2-interacting protein 2 (2376 aa).

As to quaternary structure, forms a complex with MAG2, ZW10/MIP1 and MIP3 on the endoplasmic reticulum.

It is found in the endoplasmic reticulum membrane. Functionally, required for proper maturation of seed storage proteins. Forms a complex with MAG2, ZW10/MIP1 and MIP3 on the endoplasmic reticulum that may be responsible for efficient transport of seed storage proteins. This chain is MAG2-interacting protein 2, found in Arabidopsis thaliana (Mouse-ear cress).